Here is a 260-residue protein sequence, read N- to C-terminus: Adenosylcobinamide-GDP ribazoletransferase (260 aa).

6 helical membrane passes run 40–60 (AFPF…LLLL), 64–84 (TDPL…TGAL), 117–137 (YGAI…AAII), 142–162 (PLAA…AIAW), 188–208 (HFAL…PFGL), and 210–230 (PLVA…VFIR).

Belongs to the CobS family. Mg(2+) is required as a cofactor.

The protein localises to the cell inner membrane. It carries out the reaction alpha-ribazole + adenosylcob(III)inamide-GDP = adenosylcob(III)alamin + GMP + H(+). It catalyses the reaction alpha-ribazole 5'-phosphate + adenosylcob(III)inamide-GDP = adenosylcob(III)alamin 5'-phosphate + GMP + H(+). It participates in cofactor biosynthesis; adenosylcobalamin biosynthesis; adenosylcobalamin from cob(II)yrinate a,c-diamide: step 7/7. Its function is as follows. Joins adenosylcobinamide-GDP and alpha-ribazole to generate adenosylcobalamin (Ado-cobalamin). Also synthesizes adenosylcobalamin 5'-phosphate from adenosylcobinamide-GDP and alpha-ribazole 5'-phosphate. The polypeptide is Adenosylcobinamide-GDP ribazoletransferase (Rhizobium etli (strain ATCC 51251 / DSM 11541 / JCM 21823 / NBRC 15573 / CFN 42)).